The primary structure comprises 375 residues: Negative elongation factor E (375 aa).

Residues 7–36 adopt a coiled-coil conformation; that stretch reads GLSEEEEALQKKFNKLKKKKKALLALKKQS. Residues 30 to 58 are disordered; that stretch reads LALKKQSSSGPASQGGVKRSLSEQPVVDT. Ser51 bears the Phosphoserine mark. Residue Lys78 forms a Glycyl lysine isopeptide (Lys-Gly) (interchain with G-Cter in SUMO1); alternate linkage. Residue Lys78 forms a Glycyl lysine isopeptide (Lys-Gly) (interchain with G-Cter in SUMO2); alternate linkage. Residues 79–262 form a disordered region; the sequence is AETKNSGFKR…SDSFPERRAP (184 aa). Residue Lys82 forms a Glycyl lysine isopeptide (Lys-Gly) (interchain with G-Cter in SUMO2) linkage. Residues 90–101 are compositionally biased toward basic and acidic residues; the sequence is RTLEGKLKDPEK. A phosphoserine mark is found at Ser113 and Ser115. Position 122 is a polyADP-ribosyl glutamic acid (Glu122). 2 positions are modified to phosphoserine: Ser131 and Ser139. A PolyADP-ribosyl glutamic acid modification is found at Glu151. The span at 155 to 167 shows a compositional bias: low complexity; that stretch reads APGAGDGPPRGFD. Glu172 carries the post-translational modification PolyADP-ribosyl glutamic acid. Ser179, Ser181, Ser185, and Ser187 each carry phosphoserine. 4 consecutive repeat copies span residues 184–185, 186–187, 188–189, and 190–191. Residues 184–247 form a 32 X 2 AA approximate tandem repeats of R-[DSE] region; sequence RSRSRDRSHD…RDRDRERDRE (64 aa). A compositionally biased stretch (basic and acidic residues) spans 186–260; that stretch reads RSRDRSHDRS…RRSDSFPERR (75 aa). Position 191 is a phosphoserine (Ser191). One copy of the 5; approximate repeat lies at 192-193; sequence HD. 4 repeat units span residues 194–195, 196–197, 198–199, and 200–201. The 10; approximate repeat unit spans residues 202 to 203; sequence KE. Repeat copies occupy residues 204–205, 206–207, 208–209, 210–211, 212–213, 214–215, and 216–217. The 18; approximate repeat unit spans residues 218 to 219; that stretch reads KD. The stretch at 220-221 is one 19; approximate repeat; that stretch reads KD. Tandem repeats lie at residues 222-223, 224-225, 226-227, and 228-229. A 24; approximate repeat occupies 230 to 231; the sequence is KE. A run of 8 repeats spans residues 232-233, 234-235, 236-237, 238-239, 240-241, 242-243, 244-245, and 246-247. 2 positions are modified to phosphoserine: Ser253 and Ser255. Residues 266–336 form the RRM domain; it reads NTLYVYGEDM…VQLKVNIARK (71 aa). 2 positions are modified to phosphothreonine: Thr276 and Thr278. Residues Ser285 and Ser357 each carry the phosphoserine modification.

The protein belongs to the RRM NELF-E family. The NELF complex is composed of NELFA, NELFB, NELFCD and NELFE. Interacts with NELFB. In terms of processing, phosphorylated by the P-TEFb complex at sites next to its RNA recognition motif, promoting its release from chromatin. Sumoylated. Post-translationally, poly-ADP-ribosylated by PARP1, thereby preventing RNA-binding and relieving transcription pausing.

Its subcellular location is the nucleus. The protein localises to the chromosome. Essential component of the NELF complex, a complex that negatively regulates the elongation of transcription by RNA polymerase II. The NELF complex, which acts via an association with the DSIF complex and causes transcriptional pausing, is counteracted by the P-TEFb kinase complex. Provides the strongest RNA binding activity of the NELF complex and may initially recruit the NELF complex to RNA. The polypeptide is Negative elongation factor E (Nelfe) (Mus musculus (Mouse)).